Consider the following 390-residue polypeptide: Glutamate 5-kinase (390 aa).

K29 contributes to the ATP binding site. The substrate site is built by S69, D156, and N168. 188–189 is an ATP binding site; the sequence is TD. A PUA domain is found at 295 to 374; sequence SGSLIVDAGA…EQFDRILGNN (80 aa).

This sequence belongs to the glutamate 5-kinase family.

The protein localises to the cytoplasm. It carries out the reaction L-glutamate + ATP = L-glutamyl 5-phosphate + ADP. The protein operates within amino-acid biosynthesis; L-proline biosynthesis; L-glutamate 5-semialdehyde from L-glutamate: step 1/2. Functionally, catalyzes the transfer of a phosphate group to glutamate to form L-glutamate 5-phosphate. The polypeptide is Glutamate 5-kinase (Psychrobacter arcticus (strain DSM 17307 / VKM B-2377 / 273-4)).